A 198-amino-acid chain; its full sequence is Probable GTP-binding protein EngB (198 aa).

The 174-residue stretch at 22 to 195 (DLPEIALAGR…WKAIHKFTKT (174 aa)) folds into the EngB-type G domain. GTP contacts are provided by residues 30-37 (GRSNVGKS), 57-61 (GKTQT), 75-78 (DVPG), 142-145 (TKAD), and 174-176 (FSS). Mg(2+) contacts are provided by S37 and T59.

It belongs to the TRAFAC class TrmE-Era-EngA-EngB-Septin-like GTPase superfamily. EngB GTPase family. Mg(2+) is required as a cofactor.

Functionally, necessary for normal cell division and for the maintenance of normal septation. This Bacillus anthracis (strain A0248) protein is Probable GTP-binding protein EngB.